Reading from the N-terminus, the 492-residue chain is Aspartyl/glutamyl-tRNA(Asn/Gln) amidotransferase subunit B (492 aa).

Belongs to the GatB/GatE family. GatB subfamily. In terms of assembly, heterotrimer of A, B and C subunits.

The catalysed reaction is L-glutamyl-tRNA(Gln) + L-glutamine + ATP + H2O = L-glutaminyl-tRNA(Gln) + L-glutamate + ADP + phosphate + H(+). It carries out the reaction L-aspartyl-tRNA(Asn) + L-glutamine + ATP + H2O = L-asparaginyl-tRNA(Asn) + L-glutamate + ADP + phosphate + 2 H(+). In terms of biological role, allows the formation of correctly charged Asn-tRNA(Asn) or Gln-tRNA(Gln) through the transamidation of misacylated Asp-tRNA(Asn) or Glu-tRNA(Gln) in organisms which lack either or both of asparaginyl-tRNA or glutaminyl-tRNA synthetases. The reaction takes place in the presence of glutamine and ATP through an activated phospho-Asp-tRNA(Asn) or phospho-Glu-tRNA(Gln). The polypeptide is Aspartyl/glutamyl-tRNA(Asn/Gln) amidotransferase subunit B (Prochlorococcus marinus (strain SARG / CCMP1375 / SS120)).